The sequence spans 299 residues: Acetylglutamate kinase (299 aa).

Substrate is bound by residues 72 to 73 (GG), arginine 94, and asparagine 196.

The protein belongs to the acetylglutamate kinase family. ArgB subfamily.

It is found in the cytoplasm. The enzyme catalyses N-acetyl-L-glutamate + ATP = N-acetyl-L-glutamyl 5-phosphate + ADP. It functions in the pathway amino-acid biosynthesis; L-arginine biosynthesis; N(2)-acetyl-L-ornithine from L-glutamate: step 2/4. Its function is as follows. Catalyzes the ATP-dependent phosphorylation of N-acetyl-L-glutamate. The protein is Acetylglutamate kinase of Burkholderia thailandensis (strain ATCC 700388 / DSM 13276 / CCUG 48851 / CIP 106301 / E264).